Reading from the N-terminus, the 1083-residue chain is Chitin synthase 2 (1083 aa).

Composition is skewed to basic and acidic residues over residues 1-10 and 18-30; these read MSSEREERTF and DDVR…ENQE. 2 disordered regions span residues 1 to 248 and 260 to 294; these read MSSE…IADD and DDDV…TLNE. A glycan (N-linked (GlcNAc...) asparagine) is linked at N23. Polar residues-rich tracts occupy residues 38–49 and 61–70; these read SYASSMAESQTL and AKLQNKNRTS. N67 is a glycosylation site (N-linked (GlcNAc...) asparagine). 2 stretches are compositionally biased toward basic and acidic residues: residues 78–100 and 117–128; these read LPRD…KEQQ and RLRDVNSHDKLP. Composition is skewed to polar residues over residues 132 to 148, 177 to 191, and 282 to 292; these read SPRN…SRSG, RPWT…FTRS, and SYMSSESQDTL. N417 carries N-linked (GlcNAc...) asparagine glycosylation. Helical transmembrane passes span 708–728, 747–767, 785–805, 820–840, 860–880, 889–909, 987–1007, and 1020–1040; these read WLNG…QIWF, FIQL…FYFV, TVIF…QFIL, ISMI…FYII, NMIV…ILYL, SAQY…YAFC, YLVL…SEIY, and FLLW…TTFA.

This sequence belongs to the chitin synthase family. Class II subfamily.

The protein localises to the cell membrane. The catalysed reaction is [(1-&gt;4)-N-acetyl-beta-D-glucosaminyl](n) + UDP-N-acetyl-alpha-D-glucosamine = [(1-&gt;4)-N-acetyl-beta-D-glucosaminyl](n+1) + UDP + H(+). Polymerizes chitin, a structural polymer of the cell wall and septum, by transferring the sugar moiety of UDP-GlcNAc to the non-reducing end of the growing chitin polymer. Plays a critical role in cell wall integrity and virulence. The protein is Chitin synthase 2 of Fusarium oxysporum f. sp. lycopersici (strain 4287 / CBS 123668 / FGSC 9935 / NRRL 34936) (Fusarium vascular wilt of tomato).